Consider the following 141-residue polypeptide: Large ribosomal subunit protein uL11 (141 aa).

Belongs to the universal ribosomal protein uL11 family. In terms of assembly, part of the ribosomal stalk of the 50S ribosomal subunit. Interacts with L10 and the large rRNA to form the base of the stalk. L10 forms an elongated spine to which L12 dimers bind in a sequential fashion forming a multimeric L10(L12)X complex. In terms of processing, one or more lysine residues are methylated.

In terms of biological role, forms part of the ribosomal stalk which helps the ribosome interact with GTP-bound translation factors. The polypeptide is Large ribosomal subunit protein uL11 (Prochlorococcus marinus (strain SARG / CCMP1375 / SS120)).